Reading from the N-terminus, the 1732-residue chain is Lys-gingipain W83 (1732 aa).

Residues 1–24 form the signal peptide; it reads MRKLLLLIAASLLGVGLYAQSAKI. A propeptide spanning residues 25 to 228 is cleaved from the precursor; sequence KLDAPTTRTT…ETAYKQLFNR (204 aa). Residues aspartate 313, aspartate 337, aspartate 339, phenylalanine 341, and glutamate 343 each contribute to the Ca(2+) site. The active-site Proton donor is histidine 444. The active-site Nucleophile is the cysteine 477. Positions 482 and 491 each coordinate Ca(2+). The segment at 965–988 is disordered; the sequence is DAPNGTPNPNPNPNPNPGTTLSES. The segment covering 970–980 has biased composition (pro residues); that stretch reads TPNPNPNPNPN. Positions 988, 990, 1001, 1003, 1005, 1007, 1022, 1024, 1043, 1146, 1147, 1433, 1435, 1446, 1448, 1450, 1452, 1470, 1472, 1490, and 1595 each coordinate Ca(2+).

It belongs to the peptidase C25 family. Proteolytically cleaved into a catalytic subunit and three adhesins. Arg-gingipain is involved in this post-translational processing.

The protein resides in the secreted. The enzyme catalyses Endopeptidase with strict specificity for lysyl bonds.. Cysteine proteinase with a strong preference for substrates with Lys in the P1 position. Hydrolyzes bovine hemoglobin, bovine serum albumin, casein, human placental type I collagen and human IgA and IgG. Disrupts the functions of polymorphonuclear leukocytes. May act as a virulence factor in the development of peridontal disease. Involved in the coaggregation of P.gingivalis with other oral bacteria. Has hemolytic activity; this is mediated by the adhesin domains and does not require the catalytic domain. The protein is Lys-gingipain W83 of Porphyromonas gingivalis (Bacteroides gingivalis).